We begin with the raw amino-acid sequence, 145 residues long: Arginine repressor (145 aa).

It belongs to the ArgR family.

It is found in the cytoplasm. It participates in amino-acid biosynthesis; L-arginine biosynthesis [regulation]. Its function is as follows. Regulates arginine biosynthesis genes. The chain is Arginine repressor from Solibacter usitatus (strain Ellin6076).